Consider the following 537-residue polypeptide: uncharacterized protein (537 aa).

6 helical membrane-spanning segments follow: residues 5-25 (IGLGLIHGLMYGIVPVAPWFV), 40-60 (LAVAGTIAGQVTLLALTFFGW), 63-83 (VLWVWYYFEPALIILGTMAVV), 115-135 (GLYYFLMSFGLMFCNPLHLEG), 149-169 (VYLLAFTVSYTAIIFIFWVTL), and 197-217 (VGIVAALFLQFANCTPEALVI).

It is found in the plastid. Its subcellular location is the chloroplast membrane. This is an uncharacterized protein from Ostreococcus tauri.